We begin with the raw amino-acid sequence, 177 residues long: MASSMMASTAAVARVGPAQTNMVAPFNGLRSSVAFPATRKANNDLSTLPSNGGRVSCMQVWPPEGLKKFETLSYLPPLSVEDLAKEVDYLLRNDWVPCIEFSKEGFVYRENHASPGYYDGRYWTMWKLPMFGCTDASQVIAEVEEAKKAYPEYFVRIIGFDNKRQVQCISFIAYKPT.

A chloroplast-targeting transit peptide spans 1–56 (MASSMMASTAAVARVGPAQTNMVAPFNGLRSSVAFPATRKANNDLSTLPSNGGRVS).

The protein belongs to the RuBisCO small chain family. As to quaternary structure, heterohexadecamer of 8 large and 8 small subunits.

It localises to the plastid. The protein resides in the chloroplast. Its function is as follows. RuBisCO catalyzes two reactions: the carboxylation of D-ribulose 1,5-bisphosphate, the primary event in carbon dioxide fixation, as well as the oxidative fragmentation of the pentose substrate. Both reactions occur simultaneously and in competition at the same active site. Although the small subunit is not catalytic it is essential for maximal activity. The chain is Ribulose bisphosphate carboxylase small subunit, chloroplastic 6 from Lemna gibba (Swollen duckweed).